Reading from the N-terminus, the 239-residue chain is Ribonuclease PH (239 aa).

Residues R86 and 124–126 (GTR) each bind phosphate.

It belongs to the RNase PH family. Homohexameric ring arranged as a trimer of dimers.

It catalyses the reaction tRNA(n+1) + phosphate = tRNA(n) + a ribonucleoside 5'-diphosphate. In terms of biological role, phosphorolytic 3'-5' exoribonuclease that plays an important role in tRNA 3'-end maturation. Removes nucleotide residues following the 3'-CCA terminus of tRNAs; can also add nucleotides to the ends of RNA molecules by using nucleoside diphosphates as substrates, but this may not be physiologically important. Probably plays a role in initiation of 16S rRNA degradation (leading to ribosome degradation) during starvation. The sequence is that of Ribonuclease PH from Rhizobium etli (strain ATCC 51251 / DSM 11541 / JCM 21823 / NBRC 15573 / CFN 42).